The primary structure comprises 112 residues: UPF0060 membrane protein Mpe_A1656 (112 aa).

4 consecutive transmembrane segments (helical) span residues 9 to 29, 34 to 54, 65 to 85, and 91 to 111; these read GLFF…WLVL, SAWL…LLTL, AYGG…DGVV, and LVGG…PRAA.

Belongs to the UPF0060 family.

The protein resides in the cell inner membrane. This is UPF0060 membrane protein Mpe_A1656 from Methylibium petroleiphilum (strain ATCC BAA-1232 / LMG 22953 / PM1).